The chain runs to 347 residues: E3 ubiquitin-protein ligase ARK2C (347 aa).

2 disordered regions span residues 23–79 (PFQR…GTLH) and 268–289 (PHKYKKRRPQDSKGKKDEGEES). The interval 267 to 269 (FPH) is ubiquitin binding. Basic and acidic residues predominate over residues 276 to 285 (PQDSKGKKDE). 2 residues coordinate Zn(2+): C295 and C298. The RING-type; atypical zinc-finger motif lies at 295–336 (CTICLSMLEDGEDVRRLPCMHLFHQLCVDQWLAMSKKCPICR). The interval 310 to 314 (RLPCM) is ubiquitin binding. H318 and C321 together coordinate Zn(2+).

Belongs to the Arkadia family. In terms of assembly, monomer; binding to the ubiquitin-conjugating enzyme E2 does not trigger homodimerization. Expressed in neurons of the nervous system.

It is found in the nucleus. It carries out the reaction S-ubiquitinyl-[E2 ubiquitin-conjugating enzyme]-L-cysteine + [acceptor protein]-L-lysine = [E2 ubiquitin-conjugating enzyme]-L-cysteine + N(6)-ubiquitinyl-[acceptor protein]-L-lysine.. With respect to regulation, binds free ubiquitin non-covalently via its RING-type zinc finger. Ubiquitin-binding leads to enhance the E3 ubiquitin-protein ligase activity by stabilizing the ubiquitin-conjugating enzyme E2 (donor ubiquitin) in the 'closed' conformation and activating ubiquitin transfer. Functionally, E3 ubiquitin-protein ligase that acts as a regulator of motor axon elongation. Required for efficient motor axon extension in the dorsal forelimb by enhancing the transcriptional responses of the SMAD1/SMAD5/SMAD8 effectors, which are activated downstream of BMP. Acts by mediating ubiquitination and degradation of SMAD inhibitors such as SMAD6, SMAD7, SKI and SNON isoform of SKIL. The protein is E3 ubiquitin-protein ligase ARK2C of Mus musculus (Mouse).